A 404-amino-acid polypeptide reads, in one-letter code: Multidrug resistance protein MdtG (404 aa).

A run of 11 helical transmembrane segments spans residues 19 to 39 (LGCF…PLYV), 56 to 76 (LVFS…GGLA), 90 to 110 (LGMA…QFLI), 113 to 133 (ALLG…ATQV), 149 to 169 (GVSG…HYGL), 171 to 191 (PVFF…FFFI), 222 to 242 (LFVT…ILTL), 254 to 274 (IAFI…LSAP), 288 to 308 (ILIV…FVQT), 317 to 337 (FLLG…LVYN), and 376 to 396 (AVFC…WNSL).

It belongs to the major facilitator superfamily. DHA1 family. MdtG (TC 2.A.1.2.20) subfamily.

The protein resides in the cell inner membrane. This chain is Multidrug resistance protein MdtG, found in Salmonella paratyphi C (strain RKS4594).